The chain runs to 449 residues: MREIISIHVGQAGTQIGNACWELYCLEHGIQPNGYMNPETASQNSDGGFSTFFSETGQGKYVPRSIYVDLEPNVIDQVRTGPYRDLFHPEQLITGKEDASNNYARGHYTVGKELVDEVTDKIRRIADNCSGLQGFLVFHSFGGGTGSGFGALLLERLAMEYTKKSKLQFSVYPAPQVSTSVVEPYNSVLTTHATLDLADCTFMVDNESCYDICRRNLDIERPSYENLNRLIAQVVSSITASLRFEGSLNVDLAEFQTNLVPYPRIHFPLVTYAPIVSAAKAFHESNSVQEITNQCFEPYNQMVKCDPRAGRYMATCLLYRGDVIPRDVQAAVTTIKAKRTIQFVDWCPTGFKIGICDRPPQHIEGSEIAKVDRAVCMLSNTTSIAEAWSRLDHKFDLMYSKRAFVHWYVGEGMEEGEFSEAREDLAALERDYEEVGQDSMEVDYMEEEY.

Positions 11, 71, 140, 144, 145, 179, 206, and 228 each coordinate GTP. Glu-71 lines the Mg(2+) pocket. Glu-254 is a catalytic residue.

The protein belongs to the tubulin family. As to quaternary structure, dimer of alpha and beta chains. A typical microtubule is a hollow water-filled tube with an outer diameter of 25 nm and an inner diameter of 15 nM. Alpha-beta heterodimers associate head-to-tail to form protofilaments running lengthwise along the microtubule wall with the beta-tubulin subunit facing the microtubule plus end conferring a structural polarity. Microtubules usually have 13 protofilaments but different protofilament numbers can be found in some organisms and specialized cells. It depends on Mg(2+) as a cofactor.

It is found in the cytoplasm. It localises to the cytoskeleton. The catalysed reaction is GTP + H2O = GDP + phosphate + H(+). In terms of biological role, tubulin is the major constituent of microtubules, a cylinder consisting of laterally associated linear protofilaments composed of alpha- and beta-tubulin heterodimers. Microtubules grow by the addition of GTP-tubulin dimers to the microtubule end, where a stabilizing cap forms. Below the cap, tubulin dimers are in GDP-bound state, owing to GTPase activity of alpha-tubulin. The polypeptide is Tubulin alpha-2 chain (tub1) (Schizosaccharomyces pombe (strain 972 / ATCC 24843) (Fission yeast)).